The following is a 418-amino-acid chain: MAGRLPACVVDCGTGYTKLGYAGNTEPQFIIPSCIAIKESAKVGDQAQRRVMKGVDDLDFFIGDEAIEKPTYATKWPIRHGIVEDWDLMERFMEQVIFKYLRAEPEDHYFLLTEPPLNTPENREYTAEIMFESFNVPGLYIAVQAVLALAASWTSRQVGERTLTGTVIDSGDGVTHVIPVAEGYVIGSCIKHIPIAGRDITYFIQQLLRDREVGIPPEQSLETAKAVKERYSYVCPDLVKEFNKYDTDGSKWIKQYTGINAISKKEFSIDVGYERFLGPEIFFHPEFANPDFTQPISEVVDEVIQNCPIDVRRPLYKNIVLSGGSTMFRDFGRRLQRDLKRTVDARLKLSEELSGGRLKPKPIDVQVITHHMQRYAVWFGGSMLASTPEFYQVCHTKKDYEEIGPSICRHNPVFGVMS.

Ala2 carries the post-translational modification N-acetylalanine. N6-acetyllysine occurs at positions 240, 244, 251, and 254.

This sequence belongs to the actin family. ARP3 subfamily. In terms of assembly, component of the Arp2/3 complex composed of ACTR2/ARP2, ACTR3/ARP3, ARPC1B/p41-ARC, ARPC2/p34-ARC, ARPC3/p21-ARC, ARPC4/p20-ARC and ARPC5/p16-ARC. Interacts with WHDC1. Interacts weakly with MEFV. Interacts with AVIL.

The protein localises to the cytoplasm. The protein resides in the cytoskeleton. It localises to the cell projection. Its subcellular location is the nucleus. Functionally, ATP-binding component of the Arp2/3 complex, a multiprotein complex that mediates actin polymerization upon stimulation by nucleation-promoting factor (NPF). The Arp2/3 complex mediates the formation of branched actin networks in the cytoplasm, providing the force for cell motility. Seems to contact the pointed end of the daughter actin filament. In podocytes, required for the formation of lamellipodia downstream of AVIL and PLCE1 regulation. In addition to its role in the cytoplasmic cytoskeleton, the Arp2/3 complex also promotes actin polymerization in the nucleus, thereby regulating gene transcription and repair of damaged DNA. The Arp2/3 complex promotes homologous recombination (HR) repair in response to DNA damage by promoting nuclear actin polymerization, leading to drive motility of double-strand breaks (DSBs). Plays a role in ciliogenesis. The sequence is that of Actin-related protein 3 (ACTR3) from Bos taurus (Bovine).